Here is a 241-residue protein sequence, read N- to C-terminus: 1-(5-phosphoribosyl)-5-[(5-phosphoribosylamino)methylideneamino] imidazole-4-carboxamide isomerase (241 aa).

Asp12 acts as the Proton acceptor in catalysis. Asp133 serves as the catalytic Proton donor.

This sequence belongs to the HisA/HisF family.

Its subcellular location is the cytoplasm. It catalyses the reaction 1-(5-phospho-beta-D-ribosyl)-5-[(5-phospho-beta-D-ribosylamino)methylideneamino]imidazole-4-carboxamide = 5-[(5-phospho-1-deoxy-D-ribulos-1-ylimino)methylamino]-1-(5-phospho-beta-D-ribosyl)imidazole-4-carboxamide. The protein operates within amino-acid biosynthesis; L-histidine biosynthesis; L-histidine from 5-phospho-alpha-D-ribose 1-diphosphate: step 4/9. The protein is 1-(5-phosphoribosyl)-5-[(5-phosphoribosylamino)methylideneamino] imidazole-4-carboxamide isomerase of Persephonella marina (strain DSM 14350 / EX-H1).